Reading from the N-terminus, the 175-residue chain is Protein FAM89A (175 aa).

The disordered stretch occupies residues 141–175; it reads FQEQGSLQDGQHHGSPRDQSPLTHLSSSDWILESI. Residues 157-169 show a composition bias toward polar residues; sequence RDQSPLTHLSSSD.

This sequence belongs to the FAM89 family.

In Mus musculus (Mouse), this protein is Protein FAM89A (Fam89a).